Consider the following 213-residue polypeptide: Orotate phosphoribosyltransferase (213 aa).

Lysine 26 is a 5-phospho-alpha-D-ribose 1-diphosphate binding site. An orotate-binding site is contributed by 34–35 (FF). 5-phospho-alpha-D-ribose 1-diphosphate-binding positions include 72–73 (YK), arginine 99, lysine 100, lysine 103, histidine 105, and 124–132 (DDVITAGTA). The orotate site is built by threonine 128 and arginine 156.

Belongs to the purine/pyrimidine phosphoribosyltransferase family. PyrE subfamily. Homodimer. Requires Mg(2+) as cofactor.

The enzyme catalyses orotidine 5'-phosphate + diphosphate = orotate + 5-phospho-alpha-D-ribose 1-diphosphate. It functions in the pathway pyrimidine metabolism; UMP biosynthesis via de novo pathway; UMP from orotate: step 1/2. Functionally, catalyzes the transfer of a ribosyl phosphate group from 5-phosphoribose 1-diphosphate to orotate, leading to the formation of orotidine monophosphate (OMP). The sequence is that of Orotate phosphoribosyltransferase from Pseudomonas savastanoi pv. phaseolicola (strain 1448A / Race 6) (Pseudomonas syringae pv. phaseolicola (strain 1448A / Race 6)).